Here is a 713-residue protein sequence, read N- to C-terminus: P-loop NTPase domain-containing protein LPA1 homolog (713 aa).

3 disordered regions span residues 218-249 (AKKR…PIGK), 504-575 (TSQA…EDLS), and 650-713 (LDSP…APDK). Residues 231 to 246 (DFDKTRPLNDKPDGKP) show a composition bias toward basic and acidic residues. Residues 504–531 (TSQAGSVNESWDNANEGTGSHVPSSSGS) are compositionally biased toward polar residues. Over residues 533–544 (KKLDGHCKEIKE) the composition is skewed to basic and acidic residues. A compositionally biased stretch (acidic residues) spans 551–562 (SDDDEEEEEEAA). The segment covering 656 to 668 (ARSSSALPISASS) has biased composition (low complexity).

In terms of biological role, required for the accumulation of phytic acid in seeds. Phytic acid is the primary storage form of phosphorus in cereal grains and other plant seeds. The protein is P-loop NTPase domain-containing protein LPA1 homolog of Oryza sativa subsp. japonica (Rice).